The following is a 2472-amino-acid chain: Spectrin alpha chain, non-erythrocytic 1 (2472 aa).

Methionine 1 carries the N-acetylmethionine modification. Spectrin repeat units follow at residues 45-146, 150-251, 256-358, 361-465, 468-570, 574-676, 679-781, 785-888, and 891-961; these read RFQF…IKLL, KLVQ…QGKL, EVQR…ARLD, YRLQ…QYEQ, DLQL…AQLA, HLQQ…KLRE, QQQQ…QKLA, RLQQ…DLED, and QAQQ…QQVA. Serine 587 is modified (phosphoserine). N6-acetyllysine is present on lysine 637. Lysine 803 is modified (N6-acetyllysine). Phosphoserine occurs at positions 924, 982, 999, 1029, 1031, and 1041. Residues 967–1026 form the SH3 domain; sequence TGKELVLALYDYQEKSPREVTMKKGDILTLLNSTNKDWWKVEVNDRQGFVPAAYVKKLDP. The Spectrin 10 repeat unit spans residues 1096–1166; it reads LFREANELQQ…LESEGLMAEE (71 aa). Tyrosine 1176 is subject to Phosphotyrosine. Serine 1190, serine 1207, serine 1217, serine 1291, serine 1306, serine 1323, and serine 1338 each carry phosphoserine. The Spectrin 11 repeat unit spans residues 1233-1336; that stretch reads HEVQRFHRDA…RADQRKAKLG (104 aa). 2 Spectrin repeats span residues 1339 to 1441 and 1446 to 1549; these read HDLQ…RMML and ELQL…KLGE. Lysine 1519 carries the post-translational modification N6-acetyllysine. Phosphoserine is present on residues serine 1550, serine 1557, serine 1578, serine 1615, and serine 1647. 7 Spectrin repeats span residues 1552 to 1656, 1659 to 1762, 1764 to 1868, 1871 to 1974, 1978 to 2081, 2092 to 2194, and 2206 to 2310; these read TLQQ…KLKE, KQQN…KLSE, HRLH…RLEE, EYQQ…KLDE, FLQF…KLLE, LFLT…LELQ, and LRQE…NLEQ. Residue threonine 2020 is modified to Phosphothreonine. N6-acetyllysine is present on lysine 2052. Position 2066 is a phosphothreonine (threonine 2066). 3 consecutive EF-hand domains span residues 2323 to 2358, 2366 to 2401, and 2404 to 2439; these read EALK…LGYD, EPDP…RETE, and KSSE…EQAD. Residues aspartate 2336, aspartate 2338, serine 2340, arginine 2342, glutamate 2347, aspartate 2379, asparagine 2381, aspartate 2383, histidine 2385, and glutamate 2390 each coordinate Ca(2+). Lysine 2421 is modified (N6-acetyllysine).

It belongs to the spectrin family. In terms of assembly, like erythrocyte spectrin, the spectrin-like proteins are capable of forming dimers which can further associate to tetramers. Interacts (via C-terminal spectrin repeats) with TRPC4. Interacts with CALM and EMD. Interacts with isoform 1 of ACP1. Identified in a complex with ACTN4, CASK, IQGAP1, MAGI2, NPHS1 and SPTBN1. Interacts with SHANK3 (via ANK repeats). Interacts with CLN3; this interaction regulates the fodrin localization at the plasma membrane. Post-translationally, phosphorylation of Tyr-1176 decreases sensitivity to cleavage by calpain in vitro. As to expression, expressed in the foot process layer of podocytes in the kidney glomerulus and in tubules (at protein level).

It localises to the cytoplasm. It is found in the cytoskeleton. The protein resides in the cell cortex. Functionally, fodrin, which seems to be involved in secretion, interacts with calmodulin in a calcium-dependent manner and is thus candidate for the calcium-dependent movement of the cytoskeleton at the membrane. This chain is Spectrin alpha chain, non-erythrocytic 1 (Sptan1), found in Rattus norvegicus (Rat).